The following is a 351-amino-acid chain: Alanine racemase (351 aa).

Lys-34 acts as the Proton acceptor; specific for D-alanine in catalysis. An N6-(pyridoxal phosphate)lysine modification is found at Lys-34. Arg-126 contacts substrate. Catalysis depends on Tyr-248, which acts as the Proton acceptor; specific for L-alanine. A substrate-binding site is contributed by Met-296.

The protein belongs to the alanine racemase family. It depends on pyridoxal 5'-phosphate as a cofactor.

It catalyses the reaction L-alanine = D-alanine. Its pathway is amino-acid biosynthesis; D-alanine biosynthesis; D-alanine from L-alanine: step 1/1. In terms of biological role, catalyzes the interconversion of L-alanine and D-alanine. May also act on other amino acids. In Deinococcus radiodurans (strain ATCC 13939 / DSM 20539 / JCM 16871 / CCUG 27074 / LMG 4051 / NBRC 15346 / NCIMB 9279 / VKM B-1422 / R1), this protein is Alanine racemase (alr).